The following is a 195-amino-acid chain: Packaging protein 2 (195 aa).

The segment at 1-124 is disordered; sequence MAPKKKLQLP…QEQQQRQGYR (124 aa). Positions 15-53 are enriched in acidic residues; the sequence is TDEEEYWDSQAEEVLDEEEEMMEDWDSLDEASEAEEVSD. The segment covering 54 to 63 has biased composition (low complexity); sequence ETPSPSVAFP.

This sequence belongs to the adenoviridae splicing factor family. Part of a genome packaging complex composed of packaging proteins 1, 2 and 3; this complex specifically binds to the packaging sequence on the left end of viral genomic DNA and performs packaging of the viral genome. Self-assembles into higher-order structures.

The protein localises to the host nucleus. Its function is as follows. Component of the packaging machinery which encapsidates the viral DNA into preformed capsids and transcriptional activator of the viral major late promoter (MLP). Binds, along with packaging proteins 1 and 3, to the specific packaging sequence on the left end of viral genomic DNA and plays an active role in packaging of the viral genome into preformed capsids. Specifically binds to the 5'-TTTG-3' nucleotides of the repeats making up the packaging sequence. Forms a transcription factor called DEF-A through cooperative binding with packaging protein 1. DEF-A binds to downstream elements of the major late promoter (MLP) and stimulates transcription from the MLP after initiation of viral DNA replication. Simultaneously suppresses early gene expression and is thus likely to participate in the early-late switch in the expression pattern of the late viral proteins. May as well enhance transcription from IVa2 and pIX promoters. The sequence is that of Packaging protein 2 from Homo sapiens (Human).